A 673-amino-acid polypeptide reads, in one-letter code: UvrABC system protein B (673 aa).

The 389-residue stretch at 26 to 414 folds into the Helicase ATP-binding domain; sequence EGLEDGLAHQ…GGDVVDQVVR (389 aa). 39–46 is a binding site for ATP; it reads GVTGSGKT. A Beta-hairpin motif is present at residues 92 to 115; sequence YYDYYQPEAYVPSSDTFIEKDASV. A Helicase C-terminal domain is found at 431 to 597; that stretch reads QVDDLLSEIR…GLNKKVVDIL (167 aa). The region spanning 633 to 668 is the UVR domain; that stretch reads QQKIHELEGLMMQHAQNLEFEEAAQIRDQLHQLREL.

The protein belongs to the UvrB family. Forms a heterotetramer with UvrA during the search for lesions. Interacts with UvrC in an incision complex.

It localises to the cytoplasm. Its function is as follows. The UvrABC repair system catalyzes the recognition and processing of DNA lesions. A damage recognition complex composed of 2 UvrA and 2 UvrB subunits scans DNA for abnormalities. Upon binding of the UvrA(2)B(2) complex to a putative damaged site, the DNA wraps around one UvrB monomer. DNA wrap is dependent on ATP binding by UvrB and probably causes local melting of the DNA helix, facilitating insertion of UvrB beta-hairpin between the DNA strands. Then UvrB probes one DNA strand for the presence of a lesion. If a lesion is found the UvrA subunits dissociate and the UvrB-DNA preincision complex is formed. This complex is subsequently bound by UvrC and the second UvrB is released. If no lesion is found, the DNA wraps around the other UvrB subunit that will check the other stand for damage. This is UvrABC system protein B from Shigella flexneri.